Reading from the N-terminus, the 471-residue chain is Putative multidrug resistance protein MdtD (471 aa).

Topologically, residues 1–11 (MTDLPDSTRWQ) are periplasmic. Residues 12 to 32 (LWIVAFGFFMQSLDTTIVNTA) traverse the membrane as a helical segment. Over 33 to 48 (LPSMAQSLGESPLHMH) the chain is Cytoplasmic. A helical transmembrane segment spans residues 49–69 (MVIVSYVLTVAVMLPASGWLA). Residues 70-76 (DKVGVRN) are Periplasmic-facing. Residues 77 to 97 (IFFTAIVLFTLGSLFCALSGT) form a helical membrane-spanning segment. The Cytoplasmic segment spans residues 98–101 (LNEL). A helical membrane pass occupies residues 102 to 124 (LLARALQGVGGAMMVPVGRLTVM). Over 125–137 (KIVPREQYMAAMT) the chain is Periplasmic. Residues 138–158 (FVTLPGQVGPLLGPALGGLLV) traverse the membrane as a helical segment. Over 159 to 164 (EYASWH) the chain is Cytoplasmic. The helical transmembrane segment at 165 to 185 (WIFLINIPVGIIGAIATLMLM) threads the bilayer. The Periplasmic segment spans residues 186–196 (PNYTMQTRRFD). A helical membrane pass occupies residues 197 to 217 (LSGFLLLAVGMAVLTLALDGS). Residues 218–224 (KGTGFSP) lie on the Cytoplasmic side of the membrane. The chain crosses the membrane as a helical span at residues 225–245 (LAIAGLVAVGVVALVLYLLHA). The Periplasmic segment spans residues 246–262 (QNNNRALFSLKLFRTRT). The helical transmembrane segment at 263–283 (FSLGLAGSFAGRIGSGMLPFM) threads the bilayer. Over 284–285 (TP) the chain is Cytoplasmic. A helical transmembrane segment spans residues 286–306 (VFLQIGLGFSPFHAGLMMIPM). Topologically, residues 307 to 341 (VLGSMGMKRIVVQVVNRFGYRRVLVATTLGLSLVT) are periplasmic. Residues 342–362 (LLFMTTALLGWYYVLPFVLFL) form a helical membrane-spanning segment. At 363–395 (QGMVNSTRFSSMNTLTLKDLPDNLASSGNSLLS) the chain is on the cytoplasmic side. Residues 396–416 (MIMQLSMSIGVTIAGLLLGLF) traverse the membrane as a helical segment. The Periplasmic portion of the chain corresponds to 417–430 (GSQHVSVDSGTTQT). A helical membrane pass occupies residues 431 to 451 (VFMYTWLSMAFIIALPAFVFA). Over 452-471 (RVPSDTHQNVAISRRKRSAQ) the chain is Cytoplasmic.

The protein belongs to the major facilitator superfamily. TCR/Tet family.

The protein localises to the cell inner membrane. The polypeptide is Putative multidrug resistance protein MdtD (Escherichia coli O45:K1 (strain S88 / ExPEC)).